A 425-amino-acid chain; its full sequence is 3-phosphoshikimate 1-carboxyvinyltransferase (425 aa).

Positions 20, 21, and 25 each coordinate 3-phosphoshikimate. Lys20 is a binding site for phosphoenolpyruvate. Positions 92 and 120 each coordinate phosphoenolpyruvate. 3-phosphoshikimate contacts are provided by Ser165, Gln167, Asp312, and Lys339. Position 167 (Gln167) interacts with phosphoenolpyruvate. Asp312 serves as the catalytic Proton acceptor. Phosphoenolpyruvate is bound by residues Arg343 and Arg385.

This sequence belongs to the EPSP synthase family. In terms of assembly, monomer.

Its subcellular location is the cytoplasm. It carries out the reaction 3-phosphoshikimate + phosphoenolpyruvate = 5-O-(1-carboxyvinyl)-3-phosphoshikimate + phosphate. The protein operates within metabolic intermediate biosynthesis; chorismate biosynthesis; chorismate from D-erythrose 4-phosphate and phosphoenolpyruvate: step 6/7. Its function is as follows. Catalyzes the transfer of the enolpyruvyl moiety of phosphoenolpyruvate (PEP) to the 5-hydroxyl of shikimate-3-phosphate (S3P) to produce enolpyruvyl shikimate-3-phosphate and inorganic phosphate. The chain is 3-phosphoshikimate 1-carboxyvinyltransferase from Alkaliphilus metalliredigens (strain QYMF).